Reading from the N-terminus, the 212-residue chain is Peptide methionine sulfoxide reductase MsrA (212 aa).

The active site involves cysteine 52.

This sequence belongs to the MsrA Met sulfoxide reductase family.

The enzyme catalyses L-methionyl-[protein] + [thioredoxin]-disulfide + H2O = L-methionyl-(S)-S-oxide-[protein] + [thioredoxin]-dithiol. It carries out the reaction [thioredoxin]-disulfide + L-methionine + H2O = L-methionine (S)-S-oxide + [thioredoxin]-dithiol. Functionally, has an important function as a repair enzyme for proteins that have been inactivated by oxidation. Catalyzes the reversible oxidation-reduction of methionine sulfoxide in proteins to methionine. This chain is Peptide methionine sulfoxide reductase MsrA, found in Cronobacter sakazakii (strain ATCC BAA-894) (Enterobacter sakazakii).